Reading from the N-terminus, the 629-residue chain is tRNA uridine 5-carboxymethylaminomethyl modification enzyme MnmG (629 aa).

13 to 18 (GGGHAG) is a binding site for FAD. An NAD(+)-binding site is contributed by 273 to 287 (GPRYCPSIEDKIHRF).

Belongs to the MnmG family. Homodimer. Heterotetramer of two MnmE and two MnmG subunits. FAD serves as cofactor.

Its subcellular location is the cytoplasm. NAD-binding protein involved in the addition of a carboxymethylaminomethyl (cmnm) group at the wobble position (U34) of certain tRNAs, forming tRNA-cmnm(5)s(2)U34. The protein is tRNA uridine 5-carboxymethylaminomethyl modification enzyme MnmG of Shewanella baltica (strain OS155 / ATCC BAA-1091).